The primary structure comprises 397 residues: Tryptophan synthase beta chain (397 aa).

The residue at position 87 (lysine 87) is an N6-(pyridoxal phosphate)lysine.

This sequence belongs to the TrpB family. In terms of assembly, tetramer of two alpha and two beta chains. The cofactor is pyridoxal 5'-phosphate.

It carries out the reaction (1S,2R)-1-C-(indol-3-yl)glycerol 3-phosphate + L-serine = D-glyceraldehyde 3-phosphate + L-tryptophan + H2O. It participates in amino-acid biosynthesis; L-tryptophan biosynthesis; L-tryptophan from chorismate: step 5/5. In terms of biological role, the beta subunit is responsible for the synthesis of L-tryptophan from indole and L-serine. This chain is Tryptophan synthase beta chain, found in Cronobacter sakazakii (strain ATCC BAA-894) (Enterobacter sakazakii).